The chain runs to 186 residues: MSSNNLVAKIAQPYASALLDLANEKKAIEQISQDMKLIKDILLQSGKLKYFLANPLKTIEAKKQVIAATFGDQISENTLSFLMVLVDRKRISMLDVIAGKYLELAYAMESLTIANISTSIALNSDQENLLIDKIKAMTSAKEVKLVISVDPELIGGFTIQIGSKVIDTSIRGQLKQMASHLDVAAM.

The protein belongs to the ATPase delta chain family. As to quaternary structure, F-type ATPases have 2 components, F(1) - the catalytic core - and F(0) - the membrane proton channel. F(1) has five subunits: alpha(3), beta(3), gamma(1), delta(1), epsilon(1). CF(0) has four main subunits: a(1), b(1), b'(1) and c(10-14). The alpha and beta chains form an alternating ring which encloses part of the gamma chain. F(1) is attached to F(0) by a central stalk formed by the gamma and epsilon chains, while a peripheral stalk is formed by the delta, b and b' chains.

It is found in the plastid. It localises to the chloroplast thylakoid membrane. Functionally, f(1)F(0) ATP synthase produces ATP from ADP in the presence of a proton or sodium gradient. F-type ATPases consist of two structural domains, F(1) containing the extramembraneous catalytic core and F(0) containing the membrane proton channel, linked together by a central stalk and a peripheral stalk. During catalysis, ATP synthesis in the catalytic domain of F(1) is coupled via a rotary mechanism of the central stalk subunits to proton translocation. In terms of biological role, this protein is part of the stalk that links CF(0) to CF(1). It either transmits conformational changes from CF(0) to CF(1) or is implicated in proton conduction. This Porphyra purpurea (Red seaweed) protein is ATP synthase subunit delta, chloroplastic.